The chain runs to 154 residues: Transcriptional repressor NrdR (154 aa).

The segment at Cys3 to Cys34 is a zinc-finger region. The ATP-cone domain maps to Leu46–Asp136.

Belongs to the NrdR family. Zn(2+) serves as cofactor.

Negatively regulates transcription of bacterial ribonucleotide reductase nrd genes and operons by binding to NrdR-boxes. The chain is Transcriptional repressor NrdR from Mycobacterium avium (strain 104).